A 627-amino-acid chain; its full sequence is Mitochondrial distribution and morphology protein 34 (627 aa).

Positions methionine 1–leucine 195 constitute an SMP-LTD domain. Disordered stretches follow at residues serine 209–glutamine 230, alanine 332–proline 470, leucine 486–serine 557, and arginine 586–histidine 627. Composition is skewed to low complexity over residues proline 215–leucine 225 and alanine 332–arginine 341. The span at arginine 360–arginine 372 shows a compositional bias: basic residues. Over residues valine 373–aspartate 384 the composition is skewed to basic and acidic residues. Low complexity predominate over residues serine 390 to threonine 412. Basic and acidic residues predominate over residues threonine 436–serine 451. A compositionally biased stretch (low complexity) spans proline 528–serine 557.

The protein belongs to the MDM34 family. Component of the ER-mitochondria encounter structure (ERMES) or MDM complex, composed of MMM1, MDM10, MDM12 and MDM34.

Its subcellular location is the mitochondrion outer membrane. Component of the ERMES/MDM complex, which serves as a molecular tether to connect the endoplasmic reticulum (ER) and mitochondria. Components of this complex are involved in the control of mitochondrial shape and protein biogenesis, and function in nonvesicular lipid trafficking between the ER and mitochondria. MDM34 is required for the interaction of the ER-resident membrane protein MMM1 and the outer mitochondrial membrane-resident beta-barrel protein MDM10. The sequence is that of Mitochondrial distribution and morphology protein 34 from Blastomyces gilchristii (strain SLH14081) (Blastomyces dermatitidis).